A 1205-amino-acid polypeptide reads, in one-letter code: Plasma membrane calcium-transporting ATPase 1 (1205 aa).

The Cytoplasmic portion of the chain corresponds to 2-104 (GDMANNSVAY…KTFLQLVWEA (103 aa)). The segment at 94–111 (PKTFLQLVWEALQDVTLI) is calmodulin-binding subdomain A. Residues 105 to 125 (LQDVTLIILEIAAVVSLGLSF) traverse the membrane as a helical segment. The Extracellular portion of the chain corresponds to 126–153 (YQPPGGNEALCGSVNVGEEEEESEAGWI). The helical transmembrane segment at 154 to 174 (EGAAILLSVVCVVLVTAFNDW) threads the bilayer. Over 175–351 (SKEKQFRGLQ…KEKSVLQGKL (177 aa)) the chain is Cytoplasmic. The disordered stretch occupies residues 296 to 343 (EEEKEKEKKDKKTKAQDGAAMEMQPLKSEDGVDGDEKDKKRSNLPKKE). 2 stretches are compositionally biased toward basic and acidic residues: residues 300–310 (EKEKKDKKTKA) and 322–343 (KSEDGVDGDEKDKKRSNLPKKE). The helical transmembrane segment at 352-371 (TKLAVQIGKAGLLMSAITVI) threads the bilayer. The Extracellular segment spans residues 372–403 (ILVLYFVIDTSWVQKRPWLAECTPIYIQYFVK). Residues 404 to 424 (FFIIGVTVLVVAVPEGLPLAV) traverse the membrane as a helical segment. At 425 to 840 (TISLAYSVKK…RNVYDSISKF (416 aa)) the chain is on the cytoplasmic side. The active-site 4-aspartylphosphate intermediate is the aspartate 460. Residues aspartate 460, threonine 462, and aspartate 782 each coordinate Mg(2+). Residues 841 to 861 (LQFQLTVNVVAVIVAFTGACI) form a helical membrane-spanning segment. Residues 862-868 (TQDSPLK) are Extracellular-facing. Residues 869-889 (AVQMLWVNLIMDTLASLALAT) traverse the membrane as a helical segment. Topologically, residues 890–912 (EPPTEALLLRKPYGRNKPLISRT) are cytoplasmic. A helical membrane pass occupies residues 913–933 (MMKNILGHAFYQLVVVFTLLF). The Extracellular portion of the chain corresponds to 934-956 (AGEKIFDIDSGRNAPLHAPPSEH). The helical transmembrane segment at 957-976 (YTIVFNTFVMMQLFNEINAR) threads the bilayer. Over 977–990 (KIHGERNVFEGIFN) the chain is Cytoplasmic. A helical membrane pass occupies residues 991 to 1012 (NAIFCTIVLGTFVVQIIIVQFG). Over 1013 to 1024 (GKPFSCSKLSIE) the chain is Extracellular. Residues 1025–1045 (QWLWSVFLGMGTLLWGQLIST) traverse the membrane as a helical segment. Residues 1046–1205 (IPTSRLKFLK…SPLHSLETSL (160 aa)) are Cytoplasmic-facing. Threonine 1101 carries the phosphothreonine; by PKC modification. Residues 1145-1205 (PLIDDTDAED…SPLHSLETSL (61 aa)) form a disordered region. Residues 1183–1205 (TDMNKSATSSSPGSPLHSLETSL) are compositionally biased toward polar residues.

It belongs to the cation transport ATPase (P-type) (TC 3.A.3) family. Type IIB subfamily.

The protein localises to the cell membrane. The catalysed reaction is Ca(2+)(in) + ATP + H2O = Ca(2+)(out) + ADP + phosphate + H(+). Catalyzes the hydrolysis of ATP coupled with the transport of calcium from the cytoplasm to the extracellular space thereby maintaining intracellular calcium homeostasis. The sequence is that of Plasma membrane calcium-transporting ATPase 1 from Gallus gallus (Chicken).